Here is a 139-residue protein sequence, read N- to C-terminus: Protein spalt-accessory (139 aa).

The signal sequence occupies residues 1 to 16 (MKLLIALLALVTAAIA). The span at 60 to 75 (GIGQGGVHPGQGGFAG) shows a compositional bias: gly residues. The disordered stretch occupies residues 60 to 139 (GIGQGGVHPG…HHEHHGHHRH (80 aa)). The span at 109-121 (NPHEYPEHHGEHH) shows a compositional bias: basic and acidic residues. Residues 122 to 139 (REHHEHHGHHEHHGHHRH) show a composition bias toward basic residues.

The protein localises to the secreted. In terms of biological role, likely to be involved in the establishment of the head. The sequence is that of Protein spalt-accessory (sala) from Drosophila simulans (Fruit fly).